The chain runs to 154 residues: Acidic phospholipase A2 1 (154 aa).

The first 19 residues, 1 to 19 (MHPAHLLVLLGVCVSLLGA), serve as a signal peptide directing secretion. Positions 20–27 (ARIPPLPL) are excised as a propeptide. 7 cysteine pairs are disulfide-bonded: Cys38–Cys104, Cys54–Cys153, Cys56–Cys72, Cys71–Cys132, Cys78–Cys125, Cys88–Cys118, and Cys111–Cys123. Ca(2+) contacts are provided by Phe55, Gly57, and Gly59. His75 is an active-site residue. A Ca(2+)-binding site is contributed by Asp76. Asp126 is an active-site residue.

The protein belongs to the phospholipase A2 family. Group I subfamily. D49 sub-subfamily. Monomer. The cofactor is Ca(2+). As to expression, expressed by the venom gland.

Its subcellular location is the secreted. It carries out the reaction a 1,2-diacyl-sn-glycero-3-phosphocholine + H2O = a 1-acyl-sn-glycero-3-phosphocholine + a fatty acid + H(+). In terms of biological role, snake venom phospholipase A2 (PLA2) that shows moderate enzymatic activity and exhibits procoagulant activity. PLA2 catalyzes the calcium-dependent hydrolysis of the 2-acyl groups in 3-sn-phosphoglycerides. This Pseudonaja textilis (Eastern brown snake) protein is Acidic phospholipase A2 1.